We begin with the raw amino-acid sequence, 516 residues long: 2-isopropylmalate synthase (516 aa).

Residues 5-268 (LIIFDTTLRD…DLGIDTTQIV (264 aa)) enclose the Pyruvate carboxyltransferase domain. Residues Asp-14, His-202, His-204, and Asn-239 each coordinate Mn(2+). The regulatory domain stretch occupies residues 395–516 (KFVSLSQHSE…DKLNPQRADI (122 aa)).

It belongs to the alpha-IPM synthase/homocitrate synthase family. LeuA type 1 subfamily. Homodimer. Requires Mn(2+) as cofactor.

The protein resides in the cytoplasm. It catalyses the reaction 3-methyl-2-oxobutanoate + acetyl-CoA + H2O = (2S)-2-isopropylmalate + CoA + H(+). It functions in the pathway amino-acid biosynthesis; L-leucine biosynthesis; L-leucine from 3-methyl-2-oxobutanoate: step 1/4. In terms of biological role, catalyzes the condensation of the acetyl group of acetyl-CoA with 3-methyl-2-oxobutanoate (2-ketoisovalerate) to form 3-carboxy-3-hydroxy-4-methylpentanoate (2-isopropylmalate). The protein is 2-isopropylmalate synthase of Paraburkholderia phymatum (strain DSM 17167 / CIP 108236 / LMG 21445 / STM815) (Burkholderia phymatum).